The primary structure comprises 250 residues: 26 kDa periplasmic immunogenic protein (250 aa).

Residues 1–28 (MNTRASNFLAASFSTIMLVGAFSLPAFA) form the signal peptide.

It localises to the periplasm. This Brucella abortus (strain S19) protein is 26 kDa periplasmic immunogenic protein (bp26).